Reading from the N-terminus, the 689-residue chain is Glycine--tRNA ligase beta subunit (689 aa).

The protein belongs to the class-II aminoacyl-tRNA synthetase family. In terms of assembly, tetramer of two alpha and two beta subunits.

The protein resides in the cytoplasm. The enzyme catalyses tRNA(Gly) + glycine + ATP = glycyl-tRNA(Gly) + AMP + diphosphate. The polypeptide is Glycine--tRNA ligase beta subunit (Salmonella heidelberg (strain SL476)).